A 441-amino-acid chain; its full sequence is ATP-dependent protease ATPase subunit HslU (441 aa).

Residues Ile18, 60 to 65, Asp254, Glu319, and Arg391 contribute to the ATP site; that span reads GVGKTE.

The protein belongs to the ClpX chaperone family. HslU subfamily. As to quaternary structure, a double ring-shaped homohexamer of HslV is capped on each side by a ring-shaped HslU homohexamer. The assembly of the HslU/HslV complex is dependent on binding of ATP.

It is found in the cytoplasm. Its function is as follows. ATPase subunit of a proteasome-like degradation complex; this subunit has chaperone activity. The binding of ATP and its subsequent hydrolysis by HslU are essential for unfolding of protein substrates subsequently hydrolyzed by HslV. HslU recognizes the N-terminal part of its protein substrates and unfolds these before they are guided to HslV for hydrolysis. In Shewanella woodyi (strain ATCC 51908 / MS32), this protein is ATP-dependent protease ATPase subunit HslU.